The primary structure comprises 596 residues: Nitrite reductase (596 aa).

Positions 1–29 (MRQRTPFARPGLLASAALALVLGPLAVAA) are cleaved as a signal peptide. Residues 30–76 (QEQAAPPKDPAAALEDHKTKTDNRYEPSLDNLAQQDVAALGAPEGIP) form an N-terminal tail region. Position 46 (H46) interacts with heme c. Heme d1-binding residues include Y54 and S57. The 86-residue stretch at 77-162 (ALSDAQYNEA…ANYLLLDPAA (86 aa)) folds into the Cytochrome c domain. Heme c is bound by residues C94, C97, H98, K108, and Y122. W138, R203, H229, R232, R245, R272, Y292, R420, Q536, and T583 together coordinate heme d1. Residues 163-596 (PPEFGMKEMR…NVYNTMTDTY (434 aa)) form a D1-heme domain region.

Homodimer. It depends on heme c as a cofactor. The cofactor is heme.

It is found in the periplasm. The enzyme catalyses nitric oxide + Fe(III)-[cytochrome c] + H2O = Fe(II)-[cytochrome c] + nitrite + 2 H(+). The catalysed reaction is A + NH4(+) + H2O = hydroxylamine + AH2 + H(+). Inactivation of this cytochrome oxidase results in the loss of nitrite and nitric oxide reductase activities, but not of nitrous oxide reductase activity. The chain is Nitrite reductase (nirS) from Paracoccus denitrificans (strain Pd 1222).